A 267-amino-acid polypeptide reads, in one-letter code: Phosphatidylglycerol--prolipoprotein diacylglyceryl transferase (267 aa).

3 consecutive transmembrane segments (helical) span residues 21–41 (VSLHWYGIMYLLGFGFAYWLG), 60–80 (LLFNGFWGVVLGGRIGDVFFY), and 95–115 (IWEGGMSFHGGLLGVIVAMLW). Arginine 143 provides a ligand contact to a 1,2-diacyl-sn-glycero-3-phospho-(1'-sn-glycerol). 2 consecutive transmembrane segments (helical) span residues 203-223 (GSVAGLFLVGYGVFRFIVEYF) and 240-260 (GQLLSLPMIIGGLVIMVVAYY).

Belongs to the Lgt family.

The protein localises to the cell inner membrane. The enzyme catalyses L-cysteinyl-[prolipoprotein] + a 1,2-diacyl-sn-glycero-3-phospho-(1'-sn-glycerol) = an S-1,2-diacyl-sn-glyceryl-L-cysteinyl-[prolipoprotein] + sn-glycerol 1-phosphate + H(+). Its pathway is protein modification; lipoprotein biosynthesis (diacylglyceryl transfer). Functionally, catalyzes the transfer of the diacylglyceryl group from phosphatidylglycerol to the sulfhydryl group of the N-terminal cysteine of a prolipoprotein, the first step in the formation of mature lipoproteins. The chain is Phosphatidylglycerol--prolipoprotein diacylglyceryl transferase from Glaesserella parasuis serovar 5 (strain SH0165) (Haemophilus parasuis).